The primary structure comprises 214 residues: 3,4-dihydroxy-2-butanone 4-phosphate synthase (214 aa).

D-ribulose 5-phosphate contacts are provided by residues 40–41, Asp-45, 153–157, and Glu-177; these read RE and RRGHT. Glu-41 provides a ligand contact to Mg(2+). A Mg(2+)-binding site is contributed by His-156.

The protein belongs to the DHBP synthase family. Homodimer. Mg(2+) is required as a cofactor. Mn(2+) serves as cofactor.

It catalyses the reaction D-ribulose 5-phosphate = (2S)-2-hydroxy-3-oxobutyl phosphate + formate + H(+). It functions in the pathway cofactor biosynthesis; riboflavin biosynthesis; 2-hydroxy-3-oxobutyl phosphate from D-ribulose 5-phosphate: step 1/1. Functionally, catalyzes the conversion of D-ribulose 5-phosphate to formate and 3,4-dihydroxy-2-butanone 4-phosphate. The polypeptide is 3,4-dihydroxy-2-butanone 4-phosphate synthase (Rhodospirillum rubrum (strain ATCC 11170 / ATH 1.1.1 / DSM 467 / LMG 4362 / NCIMB 8255 / S1)).